Consider the following 404-residue polypeptide: Immediate early response gene 5-like protein (404 aa).

Disordered stretches follow at residues 86–107 (AADF…EPAA), 160–231 (AALQ…APAS), and 308–327 (QEEE…EPPG). The span at 177 to 194 (PLQPGPAPLPLPLPPPAP) shows a compositional bias: pro residues. Over residues 195-231 (AALCPRDPRAPAACSAPPGAAPPAAAASPPASPAPAS) the composition is skewed to low complexity. Acidic residues predominate over residues 308–318 (QEEEEDDEEDA).

Belongs to the IER family.

This Homo sapiens (Human) protein is Immediate early response gene 5-like protein (IER5L).